We begin with the raw amino-acid sequence, 147 residues long: Lysozyme C (147 aa).

Residues 1–18 (MKVLLLLGFIFCSMAAHG) form the signal peptide. Positions 19-147 (KRMERCEFAR…LSKYLEGCHL (129 aa)) constitute a C-type lysozyme domain. Cystine bridges form between Cys-24-Cys-145, Cys-48-Cys-133, Cys-83-Cys-99, and Cys-95-Cys-113. Residues Glu-53 and Asp-71 contribute to the active site.

It belongs to the glycosyl hydrolase 22 family. Monomer.

The protein localises to the secreted. The catalysed reaction is Hydrolysis of (1-&gt;4)-beta-linkages between N-acetylmuramic acid and N-acetyl-D-glucosamine residues in a peptidoglycan and between N-acetyl-D-glucosamine residues in chitodextrins.. In terms of biological role, lysozymes have primarily a bacteriolytic function; those in tissues and body fluids are associated with the monocyte-macrophage system and enhance the activity of immunoagents. In Trichosurus vulpecula (Brush-tailed possum), this protein is Lysozyme C (LYZ).